Reading from the N-terminus, the 247-residue chain is Small ribosomal subunit protein uS3 (247 aa).

The KH type-2 domain occupies 38 to 106; that stretch reads IRDFLSEGLD…QVQLNILEVK (69 aa). Basic and acidic residues predominate over residues 214-226; that stretch reads SLMNARDERPSRG. The segment at 214–247 is disordered; sequence SLMNARDERPSRGRRERPRRGGARRQRAEQKQEG. Residues 227–238 show a composition bias toward basic residues; sequence RRERPRRGGARR.

Belongs to the universal ribosomal protein uS3 family. In terms of assembly, part of the 30S ribosomal subunit. Forms a tight complex with proteins S10 and S14.

Its function is as follows. Binds the lower part of the 30S subunit head. Binds mRNA in the 70S ribosome, positioning it for translation. The protein is Small ribosomal subunit protein uS3 of Corynebacterium jeikeium (strain K411).